Consider the following 582-residue polypeptide: V-type ATP synthase alpha chain (582 aa).

231-238 contacts ATP; sequence GPFGSGKT.

This sequence belongs to the ATPase alpha/beta chains family.

It catalyses the reaction ATP + H2O + 4 H(+)(in) = ADP + phosphate + 5 H(+)(out). Functionally, produces ATP from ADP in the presence of a proton gradient across the membrane. The V-type alpha chain is a catalytic subunit. The polypeptide is V-type ATP synthase alpha chain (Deinococcus deserti (strain DSM 17065 / CIP 109153 / LMG 22923 / VCD115)).